The following is a 486-amino-acid chain: Matrilin-3 (486 aa).

The first 28 residues, 1–28, serve as a signal peptide directing secretion; the sequence is MPRPAPARRLPGLLLLLWPLLLLPSAAP. Residues 32–75 form a disordered region; sequence ARPGFRRLETRGPGGSPGRRPSPAAPDGAPASGTSEPGRARGAG. Residues 49–64 are compositionally biased toward low complexity; sequence GRRPSPAAPDGAPASG. One can recognise a VWFA domain in the interval 83 to 258; it reads DLVFIIDSSR…GVIEKLSSRF (176 aa). Arg-198 carries the post-translational modification Omega-N-methylarginine. 4 consecutive EGF-like domains span residues 264–305, 306–347, 348–389, and 390–431; these read ALDP…KTCS, ALDR…KTCS, AQDK…KTCS, and VRDK…KTCS. 12 cysteine pairs are disulfide-bonded: Cys-268–Cys-279, Cys-275–Cys-289, Cys-291–Cys-304, Cys-310–Cys-321, Cys-317–Cys-331, Cys-333–Cys-346, Cys-352–Cys-363, Cys-359–Cys-373, Cys-375–Cys-388, Cys-394–Cys-405, Cys-401–Cys-415, and Cys-417–Cys-430. Ser-441 is modified (phosphoserine; by FAM20C). Position 442 is a phosphothreonine; by FAM20C (Thr-442). The stretch at 456–480 forms a coiled coil; sequence DKVSSYLQRLNTKLDDILEKLKINE.

As to quaternary structure, can form homooligomers (monomers, dimers, trimers and tetramers) and heterooligomers with matrilin-1. Interacts with COMP. Component of a complex containing at least CRELD2, MANF, MATN3 and PDIA4. In terms of tissue distribution, expressed only in cartilaginous tissues, such as vertebrae, ribs and shoulders.

Its subcellular location is the secreted. Its function is as follows. Major component of the extracellular matrix of cartilage and may play a role in the formation of extracellular filamentous networks. This is Matrilin-3 (MATN3) from Homo sapiens (Human).